The sequence spans 241 residues: ATP synthase subunit a (241 aa).

5 consecutive transmembrane segments (helical) span residues 30-50 (GQVFLTSWILLGALLVFISFG), 91-111 (FIGTLFLFVFVSNWGGALIPW), 128-148 (INTTIALALLVSLSYFYAGLS), 193-213 (LVVGVLVFLVPLILPIPVMFL), and 214-234 (GLFTSAIQALIFATLAAYYIG).

This sequence belongs to the ATPase A chain family. F-type ATPases have 2 components, CF(1) - the catalytic core - and CF(0) - the membrane proton channel. CF(1) has five subunits: alpha(3), beta(3), gamma(1), delta(1), epsilon(1). CF(0) has four main subunits: a, b, b' and c.

It is found in the cellular thylakoid membrane. Its function is as follows. Key component of the proton channel; it plays a direct role in the translocation of protons across the membrane. In Prochlorococcus marinus (strain AS9601), this protein is ATP synthase subunit a.